A 285-amino-acid polypeptide reads, in one-letter code: Glutamate racemase (285 aa).

Substrate contacts are provided by residues 28 to 29 (DS) and 60 to 61 (YG). Catalysis depends on Cys92, which acts as the Proton donor/acceptor. 93–94 (NT) contacts substrate. The Proton donor/acceptor role is filled by Cys204. 205-206 (TH) serves as a coordination point for substrate.

Belongs to the aspartate/glutamate racemases family.

The enzyme catalyses L-glutamate = D-glutamate. Its pathway is cell wall biogenesis; peptidoglycan biosynthesis. Provides the (R)-glutamate required for cell wall biosynthesis. The polypeptide is Glutamate racemase (Escherichia coli O6:H1 (strain CFT073 / ATCC 700928 / UPEC)).